The sequence spans 54 residues: Large ribosomal subunit protein bL33A (54 aa).

It belongs to the bacterial ribosomal protein bL33 family.

The protein is Large ribosomal subunit protein bL33A (rpmG1) of Mycobacterium bovis (strain ATCC BAA-935 / AF2122/97).